The primary structure comprises 465 residues: Probable M18 family aminopeptidase 1 (465 aa).

Zn(2+) is bound by residues His-105, His-180, and His-441.

This sequence belongs to the peptidase M18 family. It depends on Zn(2+) as a cofactor.

The sequence is that of Probable M18 family aminopeptidase 1 (apeA) from Clostridium acetobutylicum (strain ATCC 824 / DSM 792 / JCM 1419 / IAM 19013 / LMG 5710 / NBRC 13948 / NRRL B-527 / VKM B-1787 / 2291 / W).